Here is a 1209-residue protein sequence, read N- to C-terminus: DNA-directed RNA polymerase subunit beta'' (1209 aa).

Zn(2+) is bound by residues cysteine 233, cysteine 308, cysteine 315, and cysteine 318.

Belongs to the RNA polymerase beta' chain family. RpoC2 subfamily. In plastids the minimal PEP RNA polymerase catalytic core is composed of four subunits: alpha, beta, beta', and beta''. When a (nuclear-encoded) sigma factor is associated with the core the holoenzyme is formed, which can initiate transcription. The cofactor is Zn(2+).

The protein resides in the plastid. It localises to the chloroplast. The catalysed reaction is RNA(n) + a ribonucleoside 5'-triphosphate = RNA(n+1) + diphosphate. In terms of biological role, DNA-dependent RNA polymerase catalyzes the transcription of DNA into RNA using the four ribonucleoside triphosphates as substrates. This chain is DNA-directed RNA polymerase subunit beta'', found in Pinus koraiensis (Korean pine).